The sequence spans 98 residues: NADH-ubiquinone oxidoreductase chain 4L (98 aa).

3 helical membrane-spanning segments follow: residues Met1–Thr21, Val27–Ile47, and Ile61–Ile81.

The protein belongs to the complex I subunit 4L family. As to quaternary structure, core subunit of respiratory chain NADH dehydrogenase (Complex I) which is composed of 45 different subunits.

It localises to the mitochondrion inner membrane. It catalyses the reaction a ubiquinone + NADH + 5 H(+)(in) = a ubiquinol + NAD(+) + 4 H(+)(out). Core subunit of the mitochondrial membrane respiratory chain NADH dehydrogenase (Complex I) which catalyzes electron transfer from NADH through the respiratory chain, using ubiquinone as an electron acceptor. Part of the enzyme membrane arm which is embedded in the lipid bilayer and involved in proton translocation. The sequence is that of NADH-ubiquinone oxidoreductase chain 4L (MT-ND4L) from Macaca fascicularis (Crab-eating macaque).